The following is a 759-amino-acid chain: Glycerol-3-phosphate O-acyltransferase 1 (759 aa).

The Lumenal portion of the chain corresponds to 1 to 48 (MPAPKLTEKFASSKSTQKTTNYSSIEAKSVKTSADQAYIYQEPSATKK). Residues 49 to 69 (ILYSIATWLLYNIFHCFFREI) form a helical membrane-spanning segment. Topologically, residues 70–434 (RGRGSFKVPQ…AKVNFAKNLG (365 aa)) are cytoplasmic. An HXXXXD motif motif is present at residues 414 to 419 (HYNLPD). A helical transmembrane segment spans residues 435–449 (LVFFRSIGLCILFSL). A topological domain (lumenal) is located at residue alanine 450. A helical membrane pass occupies residues 451-465 (MPGIIMFSPVFILAK). Topologically, residues 466-493 (RISQEKARTALSKSTVKIKANDVIATWK) are cytoplasmic. The chain crosses the membrane as a helical span at residues 494–514 (ILIGMGFAPLLYIFWSVLITY). Over 515–523 (YLRHKPWNK) the chain is Lumenal. Residues 524-544 (IYVFSGSYISCVIVTYSALIV) traverse the membrane as a helical segment. Residues 545-759 (GDIGMDGFKS…EEEEGKEGDA (215 aa)) are Cytoplasmic-facing. Disordered stretches follow at residues 613 to 667 (EEDR…SLVN), 684 to 705 (RKSE…EFEV), and 729 to 759 (IGEN…EGDA). The segment covering 647-659 (RDNHDAYEHHNQD) has biased composition (basic and acidic residues). A compositionally biased stretch (low complexity) spans 688–702 (SSLASTSVAPSSSSE). The segment covering 736–759 (EEEEEEEEEEEEEEEEEEGKEGDA) has biased composition (acidic residues).

Belongs to the GPAT/DAPAT family.

It is found in the endoplasmic reticulum membrane. The catalysed reaction is sn-glycerol 3-phosphate + an acyl-CoA = a 1-acyl-sn-glycero-3-phosphate + CoA. It carries out the reaction dihydroxyacetone phosphate + an acyl-CoA = a 1-acylglycerone 3-phosphate + CoA. It catalyses the reaction sn-glycerol 3-phosphate + hexadecanoyl-CoA = 1-hexadecanoyl-sn-glycero-3-phosphate + CoA. The enzyme catalyses (9Z)-hexadecenoyl-CoA + sn-glycerol 3-phosphate = 1-(9Z-hexadecenoyl)-sn-glycero-3-phosphate + CoA. The catalysed reaction is sn-glycerol 3-phosphate + octadecanoyl-CoA = 1-octadecanoyl-sn-glycero-3-phosphate + CoA. It carries out the reaction sn-glycerol 3-phosphate + (9Z)-octadecenoyl-CoA = 1-(9Z-octadecenoyl)-sn-glycero-3-phosphate + CoA. It functions in the pathway phospholipid metabolism; CDP-diacylglycerol biosynthesis; CDP-diacylglycerol from sn-glycerol 3-phosphate: step 1/3. Functionally, dual substrate-specific glycerol-3-phosphate/dihydroxyacetone phosphate sn-1 acyltransferase, catalyzing the first and committed reaction in the de novo synthesis of glycerophospholipids and triacylglycerols (TAGs). Prefers Gly-3-P over dihydroxyacetone phosphate and has a marked preference for 16-carbon fatty acyl chains. Transfers a fatty acid from fatty acyl-CoA to the sn-1 position of glycerol-3-phosphate to produce lysophosphatidic acid (LysoPA). These lipids not only are precursors of glycerolipids, but also are dynamic components of signal transduction systems that control cell physiology. SCT1 is the primary supplier of diacylglycerols (DAG), used mainly in TAG synthesis and phosphatidylcholine (PC) synthesis through the CDP-choline pathway. Regulates fatty acid desaturation, that is, the ratio of unsaturated versus saturated fatty acyl chains, by competing with the desaturase OLE1 for the common substrate C16:0-CoA. Sequesters C16:0-CoA into lipids, thereby shielding it from desaturation by OLE1. This is Glycerol-3-phosphate O-acyltransferase 1 from Saccharomyces cerevisiae (strain ATCC 204508 / S288c) (Baker's yeast).